A 99-amino-acid polypeptide reads, in one-letter code: UPF0235 protein Sbal_3028 (99 aa).

This sequence belongs to the UPF0235 family.

The sequence is that of UPF0235 protein Sbal_3028 from Shewanella baltica (strain OS155 / ATCC BAA-1091).